A 451-amino-acid chain; its full sequence is uncharacterized protein (451 aa).

One can recognise a TRAM domain in the interval 2–60 (NLKVKQKIPLKIKRMGINGEGIGFYQKTLVFVPGALKGEDIYCQITSIRRNFVEAKLLK). Cys73, Cys79, Cys82, and Cys162 together coordinate [4Fe-4S] cluster. Gln283, Tyr312, Asp333, and Asp381 together coordinate S-adenosyl-L-methionine. Residue Cys408 is the Nucleophile of the active site.

It belongs to the class I-like SAM-binding methyltransferase superfamily. RNA M5U methyltransferase family.

This is an uncharacterized protein from Streptococcus pneumoniae serotype 4 (strain ATCC BAA-334 / TIGR4).